Reading from the N-terminus, the 336-residue chain is Iron-uptake system permease protein FeuC (336 aa).

9 helical membrane passes run 7-27 (LFIA…SFSV), 57-77 (VVMA…IQAI), 85-105 (PGIL…MLLF), 120-140 (MPLF…IFAW), 150-170 (IILV…FLSL), 191-211 (ANWT…PILI), 246-266 (VAII…GLIA), 280-300 (YILP…DFAG), and 308-328 (EVPA…YLLF).

Belongs to the binding-protein-dependent transport system permease family. FecCD subfamily. In terms of assembly, the complex is composed of one ATP-binding protein (YusV), two transmembrane proteins (FeuB and FeuC) and a solute-binding protein (FeuA).

It localises to the cell membrane. Its function is as follows. Involved in the uptake of iron. Probably responsible for the translocation of the substrate across the membrane. Part of the ABC transporter complex FeuABC/YusV involved in import of the catecholate siderophores bacillibactin and enterobactin. This chain is Iron-uptake system permease protein FeuC (feuC), found in Bacillus subtilis (strain 168).